The sequence spans 537 residues: MKLQVLVLVLLMSWFGVLSWVQAEFFTSIGHMTDLIYAEKDLVQSLKEYILVEEAKLAKIKSWASKMEALTSRSAADPEGYLAHPVNAYKLVKRLNTDWPALGDLVLQDASAGFVANLSVQRQFFPTDEDESGAARALMRLQDTYKLDPDTISRGELPGTKYQAMLSVDDCFGLGRSAYNEGDYYHTVLWMEQVLKQLDAGEEATVTKSLVLDYLSYAVFQLGDLHRAVELTRRLLSLDPSHERAGGNLRYFERLLEEERGKSLSNQTDAGLATQENLYERPTDYLPERDVYESLCRGEGVKLTPRRQKKLFCRYHHGNRVPQLLIAPFKEEDEWDSPHIVRYYDVMSDEEIERIKEIAKPKLARATVRDPKTGVLTVASYRVSKSSWLEEDDDPVVARVNRRMQHITGLTVKTAELLQVANYGMGGQYEPHFDFSRSDDEDAFKRLGTGNRVATFLNYMSDVEAGGATVFPDLGAAIWPKKGTAVFWYNLLRSGEGDYRTRHAACPVLVGCKWVSNKWFHERGQEFLRPCGTTEVD.

Residues 1–23 (MKLQVLVLVLLMSWFGVLSWVQA) form the signal peptide. N117 carries an N-linked (GlcNAc...) asparagine glycan. The TPR repeat unit spans residues 209–242 (SLVLDYLSYAVFQLGDLHRAVELTRRLLSLDPSH). N-linked (GlcNAc...) asparagine glycosylation occurs at N266. The 109-residue stretch at 414 to 522 (TAELLQVANY…KWVSNKWFHE (109 aa)) folds into the Fe2OG dioxygenase domain. Residues H432 and D434 each contribute to the Fe cation site. K482 is subject to N6-succinyllysine. H503 provides a ligand contact to Fe cation. Residue K513 participates in 2-oxoglutarate binding.

It belongs to the P4HA family. In terms of assembly, heterotetramer of two alpha-2 chains and two beta chains (P4HB) (the beta chain is the multi-functional PDI), where P4HB plays the role of a structural subunit; this tetramer catalyzes the formation of 4-hydroxyproline in collagen. It depends on Fe(2+) as a cofactor. L-ascorbate serves as cofactor. As to expression, expressed at least in brain, heart and lung.

It is found in the endoplasmic reticulum lumen. It carries out the reaction L-prolyl-[collagen] + 2-oxoglutarate + O2 = trans-4-hydroxy-L-prolyl-[collagen] + succinate + CO2. Its activity is regulated as follows. Inhibited by poly(L-proline) only at very high concentrations. Its function is as follows. Catalyzes the post-translational formation of 4-hydroxyproline in -Xaa-Pro-Gly- sequences in collagens and other proteins. This Mus musculus (Mouse) protein is Prolyl 4-hydroxylase subunit alpha-2 (P4ha2).